Reading from the N-terminus, the 401-residue chain is Coenzyme A biosynthesis bifunctional protein CoaBC (401 aa).

Residues 1-190 form a phosphopantothenoylcysteine decarboxylase region; that stretch reads MQTLAGKKIL…FQPKPLQDKS (190 aa). Cysteine 159 functions as the Proton donor in the catalytic mechanism. Residues 191–401 are phosphopantothenate--cysteine ligase; sequence ILITAGPTRE…LKQIQTLMGH (211 aa). CTP contacts are provided by residues aspartate 279, lysine 289, 307-310, phenylalanine 326, lysine 340, and lysine 344; that span reads PDIV.

This sequence in the N-terminal section; belongs to the HFCD (homo-oligomeric flavin containing Cys decarboxylase) superfamily. The protein in the C-terminal section; belongs to the PPC synthetase family. Mg(2+) is required as a cofactor. FMN serves as cofactor.

It catalyses the reaction N-[(R)-4-phosphopantothenoyl]-L-cysteine + H(+) = (R)-4'-phosphopantetheine + CO2. The enzyme catalyses (R)-4'-phosphopantothenate + L-cysteine + CTP = N-[(R)-4-phosphopantothenoyl]-L-cysteine + CMP + diphosphate + H(+). The protein operates within cofactor biosynthesis; coenzyme A biosynthesis; CoA from (R)-pantothenate: step 2/5. Its pathway is cofactor biosynthesis; coenzyme A biosynthesis; CoA from (R)-pantothenate: step 3/5. Catalyzes two sequential steps in the biosynthesis of coenzyme A. In the first step cysteine is conjugated to 4'-phosphopantothenate to form 4-phosphopantothenoylcysteine. In the second step the latter compound is decarboxylated to form 4'-phosphopantotheine. This chain is Coenzyme A biosynthesis bifunctional protein CoaBC, found in Vibrio vulnificus (strain CMCP6).